The following is an 820-amino-acid chain: Leucine--tRNA ligase (820 aa).

The 'HIGH' region motif lies at 40–51 (PYPSGAGLHVGH). The 'KMSKS' region signature appears at 601–605 (KMSKS). Lys-604 contributes to the ATP binding site.

This sequence belongs to the class-I aminoacyl-tRNA synthetase family.

The protein resides in the cytoplasm. It catalyses the reaction tRNA(Leu) + L-leucine + ATP = L-leucyl-tRNA(Leu) + AMP + diphosphate. This is Leucine--tRNA ligase from Chlamydia pneumoniae (Chlamydophila pneumoniae).